The sequence spans 160 residues: Phosphopantetheine adenylyltransferase (160 aa).

Position 10 (Ser-10) interacts with substrate. ATP is bound by residues Ser-10–Phe-11 and His-18. Residues Lys-42, Thr-74, and Arg-88 each coordinate substrate. ATP is bound by residues Gly-89–Arg-91, Glu-99, and Tyr-124–Thr-130.

This sequence belongs to the bacterial CoaD family. Homohexamer. Requires Mg(2+) as cofactor.

It localises to the cytoplasm. It carries out the reaction (R)-4'-phosphopantetheine + ATP + H(+) = 3'-dephospho-CoA + diphosphate. Its pathway is cofactor biosynthesis; coenzyme A biosynthesis; CoA from (R)-pantothenate: step 4/5. Its function is as follows. Reversibly transfers an adenylyl group from ATP to 4'-phosphopantetheine, yielding dephospho-CoA (dPCoA) and pyrophosphate. This chain is Phosphopantetheine adenylyltransferase, found in Leptospira borgpetersenii serovar Hardjo-bovis (strain L550).